Consider the following 202-residue polypeptide: Small ribosomal subunit protein uS4 (202 aa).

The segment at 22 to 48 (TGKELARRPYAPGDHGQGRRGKLSEYG) is disordered. Positions 93 to 154 (RRLDNMVYRL…KSKKLAVITG (62 aa)) constitute an S4 RNA-binding domain.

Belongs to the universal ribosomal protein uS4 family. Part of the 30S ribosomal subunit. Contacts protein S5. The interaction surface between S4 and S5 is involved in control of translational fidelity.

Functionally, one of the primary rRNA binding proteins, it binds directly to 16S rRNA where it nucleates assembly of the body of the 30S subunit. With S5 and S12 plays an important role in translational accuracy. The chain is Small ribosomal subunit protein uS4 from Lactiplantibacillus plantarum (strain ATCC BAA-793 / NCIMB 8826 / WCFS1) (Lactobacillus plantarum).